The primary structure comprises 446 residues: Na(+)-translocating NADH-quinone reductase subunit A (446 aa).

It belongs to the NqrA family. Composed of six subunits; NqrA, NqrB, NqrC, NqrD, NqrE and NqrF.

The enzyme catalyses a ubiquinone + n Na(+)(in) + NADH + H(+) = a ubiquinol + n Na(+)(out) + NAD(+). NQR complex catalyzes the reduction of ubiquinone-1 to ubiquinol by two successive reactions, coupled with the transport of Na(+) ions from the cytoplasm to the periplasm. NqrA to NqrE are probably involved in the second step, the conversion of ubisemiquinone to ubiquinol. The chain is Na(+)-translocating NADH-quinone reductase subunit A from Vibrio vulnificus (strain CMCP6).